Reading from the N-terminus, the 65-residue chain is Crotamine (65 aa).

An N-terminal signal peptide occupies residues 1 to 22; sequence MKILYLLFAFLFLAFLSEPGNA. 2 consecutive short sequence motifs (nuclear localization signal) follow at residues 24–40 and 49–61; these read KQCHKKGGHCFPKEKIC and KMDCRWRWKCCKK. 3 cysteine pairs are disulfide-bonded: Cys26-Cys58, Cys33-Cys52, and Cys40-Cys59.

It belongs to the crotamine-myotoxin family. As to quaternary structure, monomer. Expressed by the venom gland.

It is found in the secreted. Functionally, cationic peptide that possesses multiple functions. It acts as a cell-penetrating peptide (CPP), and as a potent voltage-gated potassium channel inhibitor. It exhibits antimicrobial activities, hind limb paralysis, and severe muscle necrosis by a non-enzymatic mechanism. As a cell-penetrating peptide, crotamine has high specificity for actively proliferating cells, and interacts inside the cell with subcellular and subnuclear structures, like vesicular compartments, chromosomes and centrioles. It penetrates into the cells as fast as five minutes after its addition to cell culture medium. In vivo, after intraperitoneal administration, it is found in cells of peritoneal fluid and bone marrow, demonstrating preferential nuclear and perinuclear localization. To enter the cell, it interacts with the chains of heparan sulfate membrane proteoglycan (HSPG), and is endocytosed (in complex with HSPG) in vesicles which are transported into the cell with the help of clathrin. Inside the cell, crotamine accumulates in lysosomal vesicles. As soon as the peptide accumulates in endosomes/lysosomes vesicles, these compartments are disrupted and their contents released into the cytosol. This loss of lysosomal content induces cell death at high concentrations, or promotes the distribution of crotamine in cytoplasmic compartments, which is a step before crotamine nuclear uptake. As a potassium channel inhibitor, this toxin selectively inhibits Kv1.1/KCNA1, Kv1.2/KCNA2 and Kv1.3/KCNA3 channels with an IC(50) of 369, 386 and 287 nM, respectively. The inhibition of Kv1.3/KCNA channels induced by this toxin occurs rapidly and is voltage-independent. The channel inhibition is reversible after washing, suggesting a pure and classical channel blockage effect, without effects in potassium channel kinetics. As an antimicrobial peptide, crotamine shows antibacterial activity against E.coli and B.subtilis, and antifungal activity against Candida spp., Trichosporon spp. and C.neoformans. It kills bacteria through membrane permeabilization. The polypeptide is Crotamine (CRO2) (Crotalus durissus terrificus (South American rattlesnake)).